Reading from the N-terminus, the 436-residue chain is tRNA-2-methylthio-N(6)-dimethylallyladenosine synthase (436 aa).

In terms of domain architecture, MTTase N-terminal spans 5 to 121 (RKLFIKTYGC…LPDMLDRTEG (117 aa)). Residues C14, C50, C84, C158, C162, and C165 each contribute to the [4Fe-4S] cluster site. Residues 144-374 (ATRGPAAFLT…TEQQRAAQMA (231 aa)) enclose the Radical SAM core domain. The TRAM domain maps to 373 to 435 (MAMVGREVGV…PNSLAGERLG (63 aa)).

Belongs to the methylthiotransferase family. MiaB subfamily. In terms of assembly, monomer. It depends on [4Fe-4S] cluster as a cofactor.

It is found in the cytoplasm. The enzyme catalyses N(6)-dimethylallyladenosine(37) in tRNA + (sulfur carrier)-SH + AH2 + 2 S-adenosyl-L-methionine = 2-methylsulfanyl-N(6)-dimethylallyladenosine(37) in tRNA + (sulfur carrier)-H + 5'-deoxyadenosine + L-methionine + A + S-adenosyl-L-homocysteine + 2 H(+). Its function is as follows. Catalyzes the methylthiolation of N6-(dimethylallyl)adenosine (i(6)A), leading to the formation of 2-methylthio-N6-(dimethylallyl)adenosine (ms(2)i(6)A) at position 37 in tRNAs that read codons beginning with uridine. This is tRNA-2-methylthio-N(6)-dimethylallyladenosine synthase from Cereibacter sphaeroides (strain ATCC 17029 / ATH 2.4.9) (Rhodobacter sphaeroides).